The sequence spans 1243 residues: Serine/threonine-protein kinase/endoribonuclease IRE1 (1243 aa).

A signal peptide spans 1-35 (MMRRPPSQGRWSASHQKLLLAFAFILIPWLQLADA). The Lumenal segment spans residues 36–585 (QQQPQQPQIR…VKALPQSAAN (550 aa)). Disordered regions lie at residues 70-132 (HAAP…KPNY) and 149-172 (QPVRAPHTSRHHWPSSSAASGLAS). A compositionally biased stretch (basic and acidic residues) spans 73–85 (PDVHPEAKFDTVN). Positions 90-99 (QQSTASPQQH) are enriched in polar residues. The span at 163–172 (SSSAASGLAS) shows a compositional bias: low complexity. N-linked (GlcNAc...) asparagine glycosylation is found at Asn-226, Asn-470, and Asn-554. Residues 586 to 606 (SVIDFVSNPILIIFLIGSLIY) traverse the membrane as a helical segment. Residues 607–1243 (NEKKLRRSYH…FREYYEPAGL (637 aa)) lie on the Cytoplasmic side of the membrane. The tract at residues 638–765 (GDESGDDKDG…QSHENDPALT (128 aa)) is disordered. The segment covering 650–660 (PSSPSPRSQPQ) has biased composition (low complexity). Basic and acidic residues predominate over residues 674 to 693 (ERNAGDQDKVKDNRSLHDVS). Positions 732 to 749 (KKKKAHRGRRGGVKHRKG) are enriched in basic residues. Positions 809 to 1105 (VDTDVELGMG…SREVMAHPFF (297 aa)) constitute a Protein kinase domain. ATP contacts are provided by residues 815-823 (LGMGSNGTV) and Lys-837. Positions 819, 837, 881, and 883 each coordinate ADP. Asp-931 serves as the catalytic Proton acceptor. Mg(2+) is bound by residues Asn-936 and Asp-953. In terms of domain architecture, KEN spans 1108–1240 (PKKRLAFLCD…TDRFREYYEP (133 aa)).

It belongs to the protein kinase superfamily. Ser/Thr protein kinase family. Requires Mg(2+) as cofactor. In terms of processing, autophosphorylated mainly on serine residues; phosphorylation enables nucleotide binding by the active site.

It is found in the endoplasmic reticulum membrane. The catalysed reaction is L-seryl-[protein] + ATP = O-phospho-L-seryl-[protein] + ADP + H(+). The enzyme catalyses L-threonyl-[protein] + ATP = O-phospho-L-threonyl-[protein] + ADP + H(+). Functionally, senses unfolded proteins in the lumen of the endoplasmic reticulum via its N-terminal domain which leads to enzyme auto-activation. The active endoribonuclease domain splices precursor mRNAs to produce their mature form which then induces transcription of UPR target genes. This chain is Serine/threonine-protein kinase/endoribonuclease IRE1, found in Hypocrea jecorina (strain QM6a) (Trichoderma reesei).